Here is a 206-residue protein sequence, read N- to C-terminus: Small ribosomal subunit protein uS4 (206 aa).

The region spanning 98–163 (MRLDNIVYRL…SEKFKTFVEN (66 aa)) is the S4 RNA-binding domain.

This sequence belongs to the universal ribosomal protein uS4 family. In terms of assembly, part of the 30S ribosomal subunit. Contacts protein S5. The interaction surface between S4 and S5 is involved in control of translational fidelity.

One of the primary rRNA binding proteins, it binds directly to 16S rRNA where it nucleates assembly of the body of the 30S subunit. Functionally, with S5 and S12 plays an important role in translational accuracy. In Clostridium beijerinckii (strain ATCC 51743 / NCIMB 8052) (Clostridium acetobutylicum), this protein is Small ribosomal subunit protein uS4.